Reading from the N-terminus, the 358-residue chain is Gentisate 1,2-dioxygenase (358 aa).

The Cupin type-2 domain maps to 99–165 (QYLGPREVAP…VTDEPMAWLD (67 aa)). The segment at 185–215 (DELSTRETPERSRGERLWGHPGLRPIGRPDQ) is disordered. A compositionally biased stretch (basic and acidic residues) spans 187–202 (LSTRETPERSRGERLW).

It belongs to the gentisate 1,2-dioxygenase family.

It catalyses the reaction 2,5-dihydroxybenzoate + O2 = 3-maleylpyruvate + H(+). In terms of biological role, involved in the degradation of salicylate via a pathway involving coenzyme A derivative. Catalyzes the oxygen-dependent ring fission of gentisate between the carboxyl and proximal hydroxyl groups at positions 1 and 2 of the aromatic ring to form maleylpyruvate. The substrate specificity is strong, since salicylate, catechol, protocatechuic acid, homogenetisate, 2,3-dihydroxybenzoate or 5-aminosalicylate cannot substitute for gentisate in the ring cleavage reaction. The sequence is that of Gentisate 1,2-dioxygenase from Streptomyces sp.